Here is a 336-residue protein sequence, read N- to C-terminus: Adenosine deaminase (336 aa).

Zn(2+)-binding residues include His15 and His17. The substrate site is built by His17, Asp19, and Gly172. Residue His199 coordinates Zn(2+). Residue Glu202 is the Proton donor of the active site. Asp279 is a Zn(2+) binding site.

Belongs to the metallo-dependent hydrolases superfamily. Adenosine and AMP deaminases family. Adenosine deaminase subfamily. The cofactor is Zn(2+).

The catalysed reaction is adenosine + H2O + H(+) = inosine + NH4(+). It carries out the reaction 2'-deoxyadenosine + H2O + H(+) = 2'-deoxyinosine + NH4(+). Catalyzes the hydrolytic deamination of adenosine and 2-deoxyadenosine. The polypeptide is Adenosine deaminase (Streptococcus thermophilus (strain ATCC BAA-491 / LMD-9)).